The chain runs to 1071 residues: Carbamoyl phosphate synthase large chain (1071 aa).

A carboxyphosphate synthetic domain region spans residues 1 to 403 (MPKRTDLKSI…SFQKALRGLE (403 aa)). ATP-binding residues include arginine 129, arginine 169, glycine 175, glycine 176, glutamine 208, valine 210, glutamate 215, glycine 241, valine 242, histidine 243, glutamine 285, and glutamate 299. Positions 133–328 (KEAMEKIGLS…IAKVAAKLAV (196 aa)) constitute an ATP-grasp 1 domain. Mg(2+) contacts are provided by glutamine 285, glutamate 299, and asparagine 301. The Mn(2+) site is built by glutamine 285, glutamate 299, and asparagine 301. Residues 404 to 548 (TGLCGFNPRS…YSTYEEECEA (145 aa)) are oligomerization domain. The tract at residues 549–930 (RPSDRKKVMI…AYYKAQLGAG (382 aa)) is carbamoyl phosphate synthetic domain. Positions 673-864 (QKVLNDLGLR…LAKVGARCMA (192 aa)) constitute an ATP-grasp 2 domain. Positions 709, 748, 750, 755, 780, 781, 782, 783, 823, and 835 each coordinate ATP. 3 residues coordinate Mg(2+): glutamine 823, glutamate 835, and asparagine 837. Mn(2+) contacts are provided by glutamine 823, glutamate 835, and asparagine 837. One can recognise an MGS-like domain in the interval 931 to 1071 (ERLNPTGKIF…ELHGRLKNRS (141 aa)). The interval 931 to 1071 (ERLNPTGKIF…ELHGRLKNRS (141 aa)) is allosteric domain.

This sequence belongs to the CarB family. Composed of two chains; the small (or glutamine) chain promotes the hydrolysis of glutamine to ammonia, which is used by the large (or ammonia) chain to synthesize carbamoyl phosphate. Tetramer of heterodimers (alpha,beta)4. Mg(2+) serves as cofactor. The cofactor is Mn(2+).

It carries out the reaction hydrogencarbonate + L-glutamine + 2 ATP + H2O = carbamoyl phosphate + L-glutamate + 2 ADP + phosphate + 2 H(+). The catalysed reaction is hydrogencarbonate + NH4(+) + 2 ATP = carbamoyl phosphate + 2 ADP + phosphate + 2 H(+). It participates in amino-acid biosynthesis; L-arginine biosynthesis; carbamoyl phosphate from bicarbonate: step 1/1. Its pathway is pyrimidine metabolism; UMP biosynthesis via de novo pathway; (S)-dihydroorotate from bicarbonate: step 1/3. In terms of biological role, large subunit of the glutamine-dependent carbamoyl phosphate synthetase (CPSase). CPSase catalyzes the formation of carbamoyl phosphate from the ammonia moiety of glutamine, carbonate, and phosphate donated by ATP, constituting the first step of 2 biosynthetic pathways, one leading to arginine and/or urea and the other to pyrimidine nucleotides. The large subunit (synthetase) binds the substrates ammonia (free or transferred from glutamine from the small subunit), hydrogencarbonate and ATP and carries out an ATP-coupled ligase reaction, activating hydrogencarbonate by forming carboxy phosphate which reacts with ammonia to form carbamoyl phosphate. This chain is Carbamoyl phosphate synthase large chain, found in Neisseria meningitidis serogroup A / serotype 4A (strain DSM 15465 / Z2491).